The chain runs to 342 residues: Sesquiterpene synthase MBR_09977 (342 aa).

Residues Asp91 and Asp96 each coordinate Mg(2+). The DDXXXD motif signature appears at 91 to 96; the sequence is DDLFVD. Substrate is bound at residue Arg184. Residues Asn230, Ser234, and Glu238 each coordinate Mg(2+).

This sequence belongs to the terpene synthase family. Requires Mg(2+) as cofactor.

It catalyses the reaction (2E,6E)-farnesyl diphosphate + H2O = (+)-corvol ether B + diphosphate. It carries out the reaction (2E,6E)-farnesyl diphosphate + H2O = (+)-corvol ether A + diphosphate. Terpene synthase that catalyzes the conversion of (2E,6E)-farnesyl diphosphate (FPP) into sesquiterpenes which are important for fungi-environment interactions. Produces a mixture consisting of 8 sesquiterpenes including corvol ethers A and B, as well as traces of epizonarene, gamma-cadinene, delta-cadinene, alpha-cadinene, alpha-cadinol, and an unidentified sesquiterpene. The major product is corvol ether A. In Metarhizium brunneum (strain ARSEF 3297), this protein is Sesquiterpene synthase MBR_09977.